The primary structure comprises 29 residues: Kalata-B15 (29 aa).

Positions 1–29 (GLPVCGESCFGGSCYTPGCSCTWPICTRD) form a cross-link, cyclopeptide (Gly-Asp). 3 cysteine pairs are disulfide-bonded: cysteine 5–cysteine 19, cysteine 9–cysteine 21, and cysteine 14–cysteine 26.

Post-translationally, this is a cyclic peptide.

Its function is as follows. Probably participates in a plant defense mechanism. The polypeptide is Kalata-B15 (Oldenlandia affinis).